A 695-amino-acid polypeptide reads, in one-letter code: MSLLLVSLLAFLTLGSGCHHRICHCSNGVFLCQESKVTEIPPDLPRNAVELRFVLTKLRVIPKGAFSGFGDLEKIEISQNDVLEVIEANVFSNLPKLHEIRIEKANNLLYIDPDAFQNLPNLRYLLISNTGVKHLPAVHKIQSLQKVLLDIQDNINIHTVERNSFVGLSFESMILWLSKNGIREIHNCAFNGTQLDELNLSDNDNLEELPNDVFQGASGPVILDISRTRIHSLPSYGLENLKKLRAKSTYNLKKLPSLEKFVTLMEASLTYPSHCCAFANWRRQISDLHPICNKSILRQEVDVMTQARGQRVSLAEDGESSLAKEFDTMYSEFDYDLCNEVVDVICSPEPDTFNPCEDIMGHDILRVLIWFISILAITGNIIVLVILITSQYKLTVPRFLMCNLAFADLCIGIYLLLIASVDIHTKTQYHNYAIDWQTGAGCDAAGFFTVFASELSVYTLTAITLERWHTITHAMQLQCKVQLRHAASIMLVGWIFAFTVALFPIFGISSYMKVSICLPMDIDSPLSQLYVVSLLVLNVLAFVVICGCYTHIYLTVRNPNIMSSSSDTKIAKRMAMLIFTDFLCMAPISFFAISASLKVPLITVSKSKILLVLFYPINSCANPFLYAIFTKNFRRDVFILLSKFGCYEMQAQTYRTENLSTAHNIHPRNGHCPPAPRITNSSSYTLIPLSRLAQN.

Residues 1 to 17 (MSLLLVSLLAFLTLGSG) form the signal peptide. Intrachain disulfides connect Cys-18/Cys-25 and Cys-23/Cys-32. Positions 18–46 (CHHRICHCSNGVFLCQESKVTEIPPDLPR) constitute an LRRNT domain. Topologically, residues 18 to 366 (CHHRICHCSN…EDIMGHDILR (349 aa)) are extracellular. LRR repeat units lie at residues 49 to 72 (VELR…FGDL), 73 to 97 (EKIE…LPKL), 98 to 118 (HEIR…AFQN), 119 to 143 (LPNL…KIQS), 144 to 169 (LQKV…VGLS), 170 to 192 (FESM…AFNG), 193 to 216 (TQLD…VFQG), 217 to 240 (ASGP…GLEN), and 241 to 259 (LKKL…PSLE). Asn-191 and Asn-199 each carry an N-linked (GlcNAc...) asparagine glycan. Disulfide bonds link Cys-275–Cys-346, Cys-276–Cys-292, Cys-276–Cys-356, and Cys-292–Cys-338. Asn-293 carries N-linked (GlcNAc...) asparagine glycosylation. Tyr-335 carries the post-translational modification Sulfotyrosine. A helical membrane pass occupies residues 367–387 (VLIWFISILAITGNIIVLVIL). Residues 388-398 (ITSQYKLTVPR) are Cytoplasmic-facing. Residues 399–421 (FLMCNLAFADLCIGIYLLLIASV) form a helical membrane-spanning segment. Residues 422 to 443 (DIHTKTQYHNYAIDWQTGAGCD) are Extracellular-facing. A disulfide bridge connects residues Cys-442 and Cys-517. The helical transmembrane segment at 444-465 (AAGFFTVFASELSVYTLTAITL) threads the bilayer. Over 466-485 (ERWHTITHAMQLQCKVQLRH) the chain is Cytoplasmic. The helical transmembrane segment at 486-508 (AASIMLVGWIFAFTVALFPIFGI) threads the bilayer. Residues 509–528 (SSYMKVSICLPMDIDSPLSQ) are Extracellular-facing. A helical membrane pass occupies residues 529-550 (LYVVSLLVLNVLAFVVICGCYT). Topologically, residues 551–573 (HIYLTVRNPNIMSSSSDTKIAKR) are cytoplasmic. The chain crosses the membrane as a helical span at residues 574 to 597 (MAMLIFTDFLCMAPISFFAISASL). Topologically, residues 598-608 (KVPLITVSKSK) are extracellular. The helical transmembrane segment at 609 to 630 (ILLVLFYPINSCANPFLYAIFT) threads the bilayer. The Cytoplasmic portion of the chain corresponds to 631 to 695 (KNFRRDVFIL…LIPLSRLAQN (65 aa)).

It belongs to the G-protein coupled receptor 1 family. FSH/LSH/TSH subfamily. Homotrimer. Functions as a homotrimer binding the FSH hormone heterodimer composed of CGA and FSHB. Interacts with ARRB2. Interacts with APPL2; interaction is independent of follicle stimulating hormone stimulation. N-glycosylated; indirectly required for FSH-binding, possibly via a conformational change that allows high affinity binding of hormone. Post-translationally, sulfated.

Its subcellular location is the cell membrane. Functionally, g protein-coupled receptor for follitropin, the follicle-stimulating hormone. Through cAMP production activates the downstream PI3K-AKT and ERK1/ERK2 signaling pathways. The protein is Follicle-stimulating hormone receptor (FSHR) of Sus scrofa (Pig).